The chain runs to 323 residues: Cytoskeleton protein RodZ (323 aa).

Topologically, residues 1–111 are cytoplasmic; sequence MNTEASQDKT…LGKRRKKRDG (111 aa). Residues 19 to 71 form the HTH cro/C1-type domain; sequence LRQAREQLGLSQQAVAERLCLKMSTVRDIEEDNLSADLASTFVRGYIRSYAKL. A DNA-binding region (H-T-H motif) is located at residues 30 to 49; it reads QQAVAERLCLKMSTVRDIEE. Residues 112–132 form a helical; Signal-anchor for type II membrane protein membrane-spanning segment; sequence WLMSFTWLIVFVVVGLTGAWW. Residues 133 to 323 are Periplasmic-facing; that stretch reads WQNHKAQQEE…RVARLTVAAQ (191 aa). Polar residues-rich tracts occupy residues 149-172 and 179-214; these read QSSAQLSQNNEGQSVPLTDSNADN and NGSTPVDTGVAPQQSQTPAVSGSATAQQPAVVSPSQ. The tract at residues 149–236 is disordered; it reads QSSAQLSQNN…APLPTADAGV (88 aa). The span at 215–234 shows a compositional bias: low complexity; sequence TTLPETTPAAPTAPLPTADA.

It belongs to the RodZ family.

The protein resides in the cell inner membrane. Cytoskeletal protein that is involved in cell-shape control through regulation of the length of the long axis. This chain is Cytoskeleton protein RodZ, found in Serratia proteamaculans (strain 568).